A 315-amino-acid polypeptide reads, in one-letter code: Methionyl-tRNA formyltransferase (315 aa).

A (6S)-5,6,7,8-tetrahydrofolate-binding site is contributed by Ser-113–Pro-116.

This sequence belongs to the Fmt family.

The enzyme catalyses L-methionyl-tRNA(fMet) + (6R)-10-formyltetrahydrofolate = N-formyl-L-methionyl-tRNA(fMet) + (6S)-5,6,7,8-tetrahydrofolate + H(+). In terms of biological role, attaches a formyl group to the free amino group of methionyl-tRNA(fMet). The formyl group appears to play a dual role in the initiator identity of N-formylmethionyl-tRNA by promoting its recognition by IF2 and preventing the misappropriation of this tRNA by the elongation apparatus. The chain is Methionyl-tRNA formyltransferase from Salmonella enteritidis PT4 (strain P125109).